We begin with the raw amino-acid sequence, 427 residues long: MAP kinase-interacting serine/threonine-protein kinase 1 (427 aa).

The segment covering 1 to 11 (MVSSQKLEKPI) has biased composition (basic and acidic residues). The tract at residues 1 to 37 (MVSSQKLEKPIEMGSSEPLPIVDSDKRRKKKRKTRAT) is disordered. Thr-34 is subject to Phosphothreonine; by PAK2. Ser-39 carries the post-translational modification Phosphoserine; by PAK2. One can recognise a Protein kinase domain in the interval 49-333 (QLTSELLGEG…AAQVLQHPWV (285 aa)). ATP is bound by residues 55 to 63 (LGEGAYAKV) and Lys-78. The active-site Proton acceptor is the Asp-170. Phosphoserine is present on residues Ser-180 and Ser-185. Phosphothreonine is present on residues Thr-209, Thr-214, and Thr-344. The segment at 407 to 427 (RALAQAGRSRDANPCLTPAGL) is disordered.

Belongs to the protein kinase superfamily. CAMK Ser/Thr protein kinase family. In terms of assembly, interacts with the C-terminal regions of EIF4G1 and EIF4G2. Also binds to dephosphorylated ERK1 and ERK2, and to the p38 kinases. The cofactor is Mg(2+). Post-translationally, dual phosphorylation of Thr-209 and Thr-214 activates the kinase. Phosphorylation of Thr-344 activates the kinase. MAPK3/ERK1 is one of the kinases which activate MKNK1/MNK1. Phosphorylation by PAK2 leads to a reduced phosphorylation of EIF4G1. As to expression, ubiquitously expressed in all tissues examined, with high levels in skeletal muscle.

It carries out the reaction L-seryl-[protein] + ATP = O-phospho-L-seryl-[protein] + ADP + H(+). The catalysed reaction is L-threonyl-[protein] + ATP = O-phospho-L-threonyl-[protein] + ADP + H(+). Phosphorylated and activated by the p38 kinases and kinases in the Erk pathway. In terms of biological role, may play a role in the response to environmental stress and cytokines. Appears to regulate translation by phosphorylating EIF4E, thus increasing the affinity of this protein for the 7-methylguanosine-containing mRNA cap. The polypeptide is MAP kinase-interacting serine/threonine-protein kinase 1 (Mknk1) (Mus musculus (Mouse)).